A 427-amino-acid polypeptide reads, in one-letter code: Trigger factor (427 aa).

The PPIase FKBP-type domain occupies 163 to 248 (GDTVILDFEG…LHEIKTKEVP (86 aa)).

Belongs to the FKBP-type PPIase family. Tig subfamily.

It is found in the cytoplasm. It catalyses the reaction [protein]-peptidylproline (omega=180) = [protein]-peptidylproline (omega=0). Functionally, involved in protein export. Acts as a chaperone by maintaining the newly synthesized protein in an open conformation. Functions as a peptidyl-prolyl cis-trans isomerase. This chain is Trigger factor, found in Listeria monocytogenes serotype 4b (strain CLIP80459).